We begin with the raw amino-acid sequence, 508 residues long: Steroid 17-alpha-hydroxylase/17,20 lyase (508 aa).

A substrate-binding site is contributed by N202. C442 is a heme binding site.

This sequence belongs to the cytochrome P450 family. Heme is required as a cofactor.

The protein resides in the endoplasmic reticulum membrane. Its subcellular location is the microsome membrane. It carries out the reaction a C21-steroid + reduced [NADPH--hemoprotein reductase] + O2 = a 17alpha-hydroxy-C21-steroid + oxidized [NADPH--hemoprotein reductase] + H2O + H(+). The enzyme catalyses progesterone + reduced [NADPH--hemoprotein reductase] + O2 = 17alpha-hydroxyprogesterone + oxidized [NADPH--hemoprotein reductase] + H2O + H(+). It catalyses the reaction pregnenolone + reduced [NADPH--hemoprotein reductase] + O2 = 17alpha-hydroxypregnenolone + oxidized [NADPH--hemoprotein reductase] + H2O + H(+). The catalysed reaction is 17alpha-hydroxyprogesterone + reduced [NADPH--hemoprotein reductase] + O2 = androst-4-ene-3,17-dione + acetate + oxidized [NADPH--hemoprotein reductase] + H2O + 2 H(+). It carries out the reaction 17alpha-hydroxyprogesterone + reduced [NADPH--hemoprotein reductase] + O2 = 16alpha,17alpha-dihydroxyprogesterone + oxidized [NADPH--hemoprotein reductase] + H2O + H(+). The enzyme catalyses 16alpha,17alpha-dihydroxyprogesterone + reduced [NADPH--hemoprotein reductase] + O2 = 6beta,16alpha,17alpha-trihydroxyprogesterone + oxidized [NADPH--hemoprotein reductase] + H2O + H(+). It catalyses the reaction 17alpha-hydroxypregnenolone + reduced [NADPH--hemoprotein reductase] + O2 = 3beta-hydroxyandrost-5-en-17-one + acetate + oxidized [NADPH--hemoprotein reductase] + H2O + 2 H(+). The catalysed reaction is 16alpha,17alpha-dihydroxypregnenolone + reduced [NADPH--hemoprotein reductase] + O2 = 3beta,16alpha-dihydroxy-androst-5-en-17-one + acetate + oxidized [NADPH--hemoprotein reductase] + H2O + 2 H(+). It carries out the reaction 3beta-hydroxyandrost-5-en-17-one + reduced [NADPH--hemoprotein reductase] + O2 = 3beta,16alpha-dihydroxy-androst-5-en-17-one + oxidized [NADPH--hemoprotein reductase] + H2O + H(+). The enzyme catalyses androst-4-ene-3,17-dione + reduced [NADPH--hemoprotein reductase] + O2 = 16alpha-hydroxyandrost-4-ene-3,17-dione + oxidized [NADPH--hemoprotein reductase] + H2O + H(+). Its pathway is steroid hormone biosynthesis. It participates in steroid biosynthesis; glucocorticoid biosynthesis. Its activity is regulated as follows. Regulated predominantly by intracellular cAMP levels. The 17,20-lyase activity is stimulated by cytochrome b5, which acts as an allosteric effector increasing the Vmax of the lyase activity. Its function is as follows. A cytochrome P450 monooxygenase involved in corticoid and androgen biosynthesis. Catalyzes 17-alpha hydroxylation of C21 steroids, which is common for both pathways. A second oxidative step, required only for androgen synthesis, involves an acyl-carbon cleavage. The 17-alpha hydroxy intermediates, as part of adrenal glucocorticoids biosynthesis pathway, are precursors of cortisol. Hydroxylates steroid hormones, pregnenolone and progesterone to form 17-alpha hydroxy metabolites, followed by the cleavage of the C17-C20 bond to form C19 steroids, dehydroepiandrosterone (DHEA) and androstenedione. Has 16-alpha hydroxylase activity. Catalyzes 16-alpha hydroxylation of 17-alpha hydroxy pregnenolone, followed by the cleavage of the C17-C20 bond to form 16-alpha-hydroxy DHEA. Also 16-alpha hydroxylates androgens, relevant for estriol synthesis. Mechanistically, uses molecular oxygen inserting one oxygen atom into a substrate, and reducing the second into a water molecule, with two electrons provided by NADPH via cytochrome P450 reductase (CPR; NADPH-ferrihemoprotein reductase). This Papio cynocephalus (Yellow baboon) protein is Steroid 17-alpha-hydroxylase/17,20 lyase (CYP17A1).